The sequence spans 526 residues: MQLTLWTYEGPPHVGAMRIAASMKGVHCVLHAPQGDTYADLLFTMIERRPGRPPVSYSTFNARHLGRDTAELVRETVTAAYERYQPEALLVGDSCTAELLQDQPGDLAQGMDLPVPVIGLELSAYSRKEGYGASEAFYQLVRGLLETNGASAGAQPDASRAPRANLLGPTSLGFRCRDDVQEVTRLLESVGVEVNVVAPLGASPEDLRRIPEADFNVCLYPEVARSTCEWLQRRFGQPTVTTVPLGLGATRDFLAEVGRVTGLDVSQGVADANARMAWYSRSVDSNYLTGKRVFIFGDGTHAVAAARIASEELGFEVVGLGTYAREEAREVRRAAKAYGVEPLITDDYLEVERAATEASPELVLGTQMERHIAKRLGVPCAVISAPVHVQDFPARYAPNMGLEGANVIFDTWVHPLMMGLEEHLLGMFKEDFEFTADAPSHLEAGAAPSPGGAAREEGQAETAVAVAESEEGAEVRWTPEAEAELKKIPFFVRGKARRNTERFAADRGIATITVETIYDAKAHFSR.

Position 36 (aspartate 36) interacts with [4Fe-4S] cluster. The active-site Proton donor is aspartate 284. 419–420 (GL) lines the substrate pocket.

Belongs to the ChlB/BchB/BchZ family. As to quaternary structure, protochlorophyllide reductase is composed of three subunits; BchL, BchN and BchB. Forms a heterotetramer of two BchB and two BchN subunits. [4Fe-4S] cluster serves as cofactor.

The enzyme catalyses chlorophyllide a + oxidized 2[4Fe-4S]-[ferredoxin] + 2 ADP + 2 phosphate = protochlorophyllide a + reduced 2[4Fe-4S]-[ferredoxin] + 2 ATP + 2 H2O. Its pathway is porphyrin-containing compound metabolism; bacteriochlorophyll biosynthesis (light-independent). Its function is as follows. Component of the dark-operative protochlorophyllide reductase (DPOR) that uses Mg-ATP and reduced ferredoxin to reduce ring D of protochlorophyllide (Pchlide) to form chlorophyllide a (Chlide). This reaction is light-independent. The NB-protein (BchN-BchB) is the catalytic component of the complex. The sequence is that of Light-independent protochlorophyllide reductase subunit B from Halorhodospira halophila (strain DSM 244 / SL1) (Ectothiorhodospira halophila (strain DSM 244 / SL1)).